Here is a 535-residue protein sequence, read N- to C-terminus: MSVHYTLNLRVFWPLVTGLCTALVCLYHVLRGSGGARAEPADGVDGGFPLLKVAVLLLLSYVLLRCRHAVRQRFLPGSPRLEGHAAFSSRHFREPGLSILLESYYEHEVRLSPHVLGHSKAHVSRIVGELVRAGRARGSPGLIPGGALALAFRGDFIQVGSAYEQHKIRRPDSFDVLVPLRLPPLVALEPRSLGEEPALAPAFRGCFLCALKAPPSPSGASGGHWLRDCKPFADAFCVDVRGRRHLSATLVLRWFQSHLQRSLATVRYSLEGRCRVTLTPGGLEQPPTLHILPCRTDYGCCRLSMAVRLIPAVHLGDGVFLVAPPPPPLPSAPLLELPEGLRAEALWGVNTARQEQKLLSWLQERAAPGACYLKCLQLLKALRDLGARGLDSAAATQWGRILSSYVLKTVLLAVLLRKGAPGQGWDEEHLGRCLEELVQFLRDCLLRRHTLFHCVLGPGGAAAEVGPLPKALREAAPVDLLAAFDGHARELAAARLLSTWQRLPQLLRAYGGPRYLARCPPPRSQRTQGFLEGEP.

Residues 1–38 (MSVHYTLNLRVFWPLVTGLCTALVCLYHVLRGSGGARA) form the signal peptide. The Extracellular portion of the chain corresponds to 39–43 (EPADG). Residues 44–64 (VDGGFPLLKVAVLLLLSYVLL) form a helical membrane-spanning segment. Residues 65–535 (RCRHAVRQRF…RTQGFLEGEP (471 aa)) are Cytoplasmic-facing. Residue serine 139 is modified to Phosphoserine.

It belongs to the ITPRIP family.

It localises to the membrane. In Homo sapiens (Human), this protein is Inositol 1,4,5-trisphosphate receptor-interacting protein-like 2 (ITPRIPL2).